Consider the following 400-residue polypeptide: Serine/threonine transporter SstT (400 aa).

Helical transmembrane passes span 14 to 34, 48 to 68, 76 to 96, 136 to 156, 177 to 197, 211 to 231, 285 to 305, 311 to 331, and 349 to 371; these read IIIA…VTPY, SVAP…FQVG, VLLL…IASL, AISE…GLAM, IIHK…AVTF, LLVV…PILV, IPLG…VLTL, LGIH…TISA, and CSLF…IISV.

The protein belongs to the dicarboxylate/amino acid:cation symporter (DAACS) (TC 2.A.23) family.

Its subcellular location is the cell inner membrane. The enzyme catalyses L-serine(in) + Na(+)(in) = L-serine(out) + Na(+)(out). The catalysed reaction is L-threonine(in) + Na(+)(in) = L-threonine(out) + Na(+)(out). Its function is as follows. Involved in the import of serine and threonine into the cell, with the concomitant import of sodium (symport system). In Acinetobacter baumannii (strain AB307-0294), this protein is Serine/threonine transporter SstT.